We begin with the raw amino-acid sequence, 479 residues long: PRAME family member 18 (479 aa).

The LRR 1 repeat unit spans residues 15–38 (QSLLRDQALAISVLDELPRELFPP). An LRR 1; degenerate repeat occupies 97-124 (RWKLQVLEMRDVDENFWTIWSGARLLSC). The stretch at 179–203 (HLCCTKVVNYSMSILNFRNILETVY) is one LRR 2; degenerate repeat. One copy of the LRR 3; degenerate repeat lies at 204-230 (PDSIQVLEIWNMCWLCMIVEFSRYLSQ). The stretch at 231 to 265 (MRNLRKLFISDGCRYLLSSDSQEQLVAEFSSVLLR) is one LRR 4; degenerate repeat. LRR repeat units follow at residues 266-291 (LENL…IRCL), 292-323 (RSPL…SQLK), 324-342 (QLNL…PLRA), 348-375 (AATL…ALSR), and 376-400 (CSNL…LLRH).

Belongs to the PRAME family.

The chain is PRAME family member 18 from Homo sapiens (Human).